A 180-amino-acid chain; its full sequence is Ribulose bisphosphate carboxylase small subunit, chloroplastic (180 aa).

The transit peptide at 1 to 56 (MASSIMSSAAVATRSNGAQASMVAPFTGLKSNASFPVSRKTNLDITSIASNGGRVR) directs the protein to the chloroplast.

Belongs to the RuBisCO small chain family. In terms of assembly, heterohexadecamer of 8 large and 8 small subunits.

It is found in the plastid. Its subcellular location is the chloroplast. RuBisCO catalyzes two reactions: the carboxylation of D-ribulose 1,5-bisphosphate, the primary event in carbon dioxide fixation, as well as the oxidative fragmentation of the pentose substrate. Both reactions occur simultaneously and in competition at the same active site. Although the small subunit is not catalytic it is essential for maximal activity. The chain is Ribulose bisphosphate carboxylase small subunit, chloroplastic from Stellaria longipes (Longstalk starwort).